The following is a 141-amino-acid chain: Large ribosomal subunit protein uL11 (141 aa).

This sequence belongs to the universal ribosomal protein uL11 family. In terms of assembly, part of the ribosomal stalk of the 50S ribosomal subunit. Interacts with L10 and the large rRNA to form the base of the stalk. L10 forms an elongated spine to which L12 dimers bind in a sequential fashion forming a multimeric L10(L12)X complex. Post-translationally, one or more lysine residues are methylated.

In terms of biological role, forms part of the ribosomal stalk which helps the ribosome interact with GTP-bound translation factors. The protein is Large ribosomal subunit protein uL11 of Chlorobium phaeovibrioides (strain DSM 265 / 1930) (Prosthecochloris vibrioformis (strain DSM 265)).